A 584-amino-acid polypeptide reads, in one-letter code: Beta-fructofuranosidase, insoluble isoenzyme CWINV1 (584 aa).

The first 28 residues, 1–28 (MTKEVCSNIGLWLLLTLLIGNYVVNLEA), serve as a signal peptide directing secretion. Residues 63–66 (WMND), Gln-82, Trp-90, and 125–126 (WS) each bind substrate. The active site involves Asp-66. Residues Asn-159 and Asn-186 are each glycosylated (N-linked (GlcNAc...) asparagine). Residues 191 to 192 (RD), Glu-246, and Asp-282 each bind substrate. Asn-342 and Asn-446 each carry an N-linked (GlcNAc...) asparagine glycan. Cys-442 and Cys-491 are disulfide-bonded.

The protein belongs to the glycosyl hydrolase 32 family. Expressed in seedlings, leaves, flowers, and seeds.

The protein localises to the secreted. It localises to the extracellular space. Its subcellular location is the apoplast. It is found in the cell wall. It catalyses the reaction Hydrolysis of terminal non-reducing beta-D-fructofuranoside residues in beta-D-fructofuranosides.. Functionally, beta-fructofuranosidase that can use sucrose and 1-kestose, and, to a lower extent, neokestose and levan, as substrates, but not inuline. The chain is Beta-fructofuranosidase, insoluble isoenzyme CWINV1 (CWINV1) from Arabidopsis thaliana (Mouse-ear cress).